We begin with the raw amino-acid sequence, 363 residues long: tRNA N6-adenosine threonylcarbamoyltransferase (363 aa).

Positions 117 and 121 each coordinate Fe cation. Residues 139–143 (LVSGG), aspartate 172, glycine 185, and asparagine 287 each bind substrate. Residue aspartate 315 coordinates Fe cation.

It belongs to the KAE1 / TsaD family. Fe(2+) is required as a cofactor.

The protein resides in the cytoplasm. It catalyses the reaction L-threonylcarbamoyladenylate + adenosine(37) in tRNA = N(6)-L-threonylcarbamoyladenosine(37) in tRNA + AMP + H(+). Functionally, required for the formation of a threonylcarbamoyl group on adenosine at position 37 (t(6)A37) in tRNAs that read codons beginning with adenine. Is involved in the transfer of the threonylcarbamoyl moiety of threonylcarbamoyl-AMP (TC-AMP) to the N6 group of A37, together with TsaE and TsaB. TsaD likely plays a direct catalytic role in this reaction. The protein is tRNA N6-adenosine threonylcarbamoyltransferase of Cereibacter sphaeroides (strain ATCC 17025 / ATH 2.4.3) (Rhodobacter sphaeroides).